The following is a 283-amino-acid chain: Non-selective voltage-gated ion channel VDAC3 (283 aa).

Cys-2 carries the post-translational modification N-acetylcysteine. Position 4 is a phosphothreonine (Thr-4). 3 positions are modified to N6-acetyllysine: Lys-12, Lys-15, and Lys-20. The next 2 membrane-spanning stretches (beta stranded) occupy residues 26-35 and 39-47; these read MVKIDLKTKS and VEFSTSGHA. Thr-33 carries the phosphothreonine modification. A Glycyl lysine isopeptide (Lys-Gly) (interchain with G-Cter in ubiquitin) cross-link involves residue Lys-53. 3 beta stranded membrane-spanning segments follow: residues 54-64, 69-76, and 80-89; these read ASGNLETKYKV, LIFTQKWN, and TLGTEISWEN. Position 90 is an N6-acetyllysine (Lys-90). Residues 95–104 traverse the membrane as a beta stranded segment; that stretch reads LKLTVDTIFV. Glycyl lysine isopeptide (Lys-Gly) (interchain with G-Cter in ubiquitin) cross-links involve residues Lys-109 and Lys-110. 10 consecutive transmembrane segments (beta stranded) span residues 111-120, 123-130, 137-145, 150-158, 163-175, 178-185, 189-198, 202-211, 218-227, and 231-238; these read SGKLKASYRR, FSVGSKVD, TIYGWAVLA, LAGYQMSFD, KLCQ…GYKA, FQLHTHVN, EFGGSIYQRV, IETSINLAWT, RFGIAAKYRL, and TSLSAKVN. The residue at position 241 (Ser-241) is a Phosphoserine. Residues 242-244 and 260-264 contribute to the NAD(+) site; these read LIG and SALVD. Transmembrane regions (beta stranded) follow at residues 242–251 and 254–263; these read LIGLGYTQSL and GVKLTLSALV. Lys-266 carries the N6-acetyllysine; alternate modification. Residue Lys-266 forms a Glycyl lysine isopeptide (Lys-Gly) (interchain with G-Cter in ubiquitin); alternate linkage. The chain crosses the membrane as a beta stranded span at residues 273–282; it reads HKVGLGFELE.

It belongs to the eukaryotic mitochondrial porin family. Interacts with ARMC12 in a TBC1D21-dependent manner. Interacts with MISFA. Post-translationally, ubiquitinated by PRKN during mitophagy, leading to its degradation and enhancement of mitophagy. Deubiquitinated by USP30. As to expression, isoform 1 is widely expressed with strong expression in atrium and ascitic tumor, lower levels in brain and very low levels in liver and kidney. Isoform 2 is also widely expressed with highest levels in brain but no expression in kidney. Also expressed in flagella of epididymal sperm.

The protein resides in the mitochondrion outer membrane. It is found in the membrane. The catalysed reaction is chloride(in) = chloride(out). It carries out the reaction K(+)(in) = K(+)(out). Its function is as follows. Non-selective voltage-gated ion channel that mediates the transport of anions and cations through the mitochondrion outer membrane and plasma membrane. Forms a high-conducting channel with a stable open state and a voltage-induced closure with a mild preference for anions over cations. Involved in male fertility and sperm mitochondrial sheath formation. The protein is Non-selective voltage-gated ion channel VDAC3 of Rattus norvegicus (Rat).